The primary structure comprises 465 residues: Mothers against decapentaplegic homolog 5 (465 aa).

Position 2 is an N-acetylthreonine (Thr2). One can recognise an MH1 domain in the interval 13–137; the sequence is PAVKRLLGWK…YKRVESPVLP (125 aa). 4 residues coordinate Zn(2+): Cys65, Cys110, Cys122, and His127. The interval 163-251 is disordered; that stretch reads NEPHMPQNAT…DTSSNMIPQT (89 aa). The segment covering 169–182 has biased composition (polar residues); the sequence is QNATFPDSFHQPNN. Over residues 186–197 the composition is skewed to pro residues; sequence PLSPNSPYPPSP. Residues 198–214 show a composition bias toward low complexity; that stretch reads ASSTYPNSPASSGPGSP. Positions 237-251 are enriched in polar residues; that stretch reads NSQPMDTSSNMIPQT. Positions 271 to 465 constitute an MH2 domain; it reads WCSIVYYELN…SPLNPISSVS (195 aa). Phosphoserine occurs at positions 463 and 465.

This sequence belongs to the dwarfin/SMAD family. Homodimer. Forms trimers with the co-SMAD SMAD4. Interacts with PEBP2-alpha subunit and SMURF1. Interacts with SUV39H1 and SUV39H2. Interacts (via MH2 domain) with LEMD3. Interacts with WWP1. Interacts with TMEM119. Interacts with ZNF8. Interacts with RANBP3L. Interacts with HK1. Interacts with HGS; this interaction attenuates BMP signaling. In terms of processing, phosphorylated on serine by BMP (bone morphogenetic proteins) type 1 receptor kinase. Post-translationally, ubiquitin-mediated proteolysis by SMAD-specific E3 ubiquitin ligase SMURF1. As to expression, predominantly expressed in mesenchyme and somites during embryogenesis, and present in many tissues of the adult.

Its subcellular location is the cytoplasm. The protein resides in the nucleus. It is found in the mitochondrion. Its function is as follows. Transcriptional regulator that plays a role in various cellular processes including embryonic development, cell differentiation, angiogenesis and tissue homeostasis. Upon BMP ligand binding to their receptors at the cell surface, is phosphorylated by activated type I BMP receptors (BMPRIs) and associates with SMAD4 to form a heteromeric complex which translocates into the nucleus acting as transcription factor. In turn, the hetero-trimeric complex recognizes cis-regulatory elements containing Smad Binding Elements (SBEs) to modulate the outcome of the signaling network. Non-phosphorylated SMAD5 has a cytoplasmic role in energy metabolism regulation by promoting mitochondrial respiration and glycolysis in response to cytoplasmic pH changes. Mechanistically, interacts with hexokinase 1/HK1 and thereby accelerates glycolysis. The polypeptide is Mothers against decapentaplegic homolog 5 (Smad5) (Mus musculus (Mouse)).